We begin with the raw amino-acid sequence, 314 residues long: Ribosomal RNA small subunit methyltransferase H (314 aa).

S-adenosyl-L-methionine-binding positions include 36 to 38 (GGH), Asp56, Phe83, Asp104, and Gln111.

The protein belongs to the methyltransferase superfamily. RsmH family.

Its subcellular location is the cytoplasm. The catalysed reaction is cytidine(1402) in 16S rRNA + S-adenosyl-L-methionine = N(4)-methylcytidine(1402) in 16S rRNA + S-adenosyl-L-homocysteine + H(+). In terms of biological role, specifically methylates the N4 position of cytidine in position 1402 (C1402) of 16S rRNA. This is Ribosomal RNA small subunit methyltransferase H from Syntrophotalea carbinolica (strain DSM 2380 / NBRC 103641 / GraBd1) (Pelobacter carbinolicus).